We begin with the raw amino-acid sequence, 137 residues long: 5-hydroxytryptamine receptor 4 (137 aa).

Residues 12-35 form a helical membrane-spanning segment; it reads TPLRVAVLLAGCWAIPVLISFLPI. Asn58 is a glycosylation site (N-linked (GlcNAc...) asparagine). A helical membrane pass occupies residues 67–90; that stretch reads NKPYAITCSVVAFYIPFLLMVLAY. The interval 112–137 is disordered; that stretch reads APAEGRPPSADQHSTHRMRTETKAAK.

This sequence belongs to the G-protein coupled receptor 1 family. Interacts (via C-terminus 330-346 AA) with GRK5; this interaction is promoted by 5-HT (serotonin).

The protein localises to the cell membrane. Its subcellular location is the endosome membrane. G-protein coupled receptor for 5-hydroxytryptamine (serotonin), a biogenic hormone that functions as a neurotransmitter, a hormone and a mitogen. Ligand binding causes a conformation change that triggers signaling via guanine nucleotide-binding proteins (G proteins) and modulates the activity of downstream effectors. HTR4 is coupled to G(s) G alpha proteins and mediates activation of adenylate cyclase activity. This chain is 5-hydroxytryptamine receptor 4 (HTR4), found in Sus scrofa (Pig).